Consider the following 332-residue polypeptide: Ribosomal RNA small subunit methyltransferase H (332 aa).

Residues 36–38 (GGY), aspartate 54, phenylalanine 81, aspartate 102, and glutamine 109 contribute to the S-adenosyl-L-methionine site. The interval 284–332 (VTAGQEEVSANPRARSAKLRAAERTAAPATADDGESPGWPSLANVMRGG) is disordered.

It belongs to the methyltransferase superfamily. RsmH family.

It localises to the cytoplasm. The enzyme catalyses cytidine(1402) in 16S rRNA + S-adenosyl-L-methionine = N(4)-methylcytidine(1402) in 16S rRNA + S-adenosyl-L-homocysteine + H(+). In terms of biological role, specifically methylates the N4 position of cytidine in position 1402 (C1402) of 16S rRNA. This chain is Ribosomal RNA small subunit methyltransferase H, found in Nitrobacter hamburgensis (strain DSM 10229 / NCIMB 13809 / X14).